The sequence spans 219 residues: Putative GEM-like protein 8 (219 aa).

One can recognise a GRAM domain in the interval 96–174; it reads KIYKRLFKVS…CKINGVNQSQ (79 aa).

Belongs to the GEM family.

In Arabidopsis thaliana (Mouse-ear cress), this protein is Putative GEM-like protein 8.